The primary structure comprises 85 residues: RNA-binding protein Hfq (85 aa).

The region spanning 9-68 is the Sm domain; sequence DPFLNALRRERIPVSIYLVNGIKLQGQIESFDQFVILLKNTVNQMVYKHAISTVVPARPV. Residues 66 to 85 are disordered; sequence RPVNHHHASDRPATLEKTEE. A compositionally biased stretch (basic and acidic residues) spans 72 to 85; sequence HASDRPATLEKTEE.

Belongs to the Hfq family. In terms of assembly, homohexamer.

Its function is as follows. RNA chaperone that binds small regulatory RNA (sRNAs) and mRNAs to facilitate mRNA translational regulation in response to envelope stress, environmental stress and changes in metabolite concentrations. Also binds with high specificity to tRNAs. In Photobacterium profundum (strain SS9), this protein is RNA-binding protein Hfq.